The chain runs to 90 residues: Caspase recruitment domain-containing protein 18 (90 aa).

Positions 1 to 90 constitute a CARD domain; the sequence is MADQLLRKKR…PQLASKMGLH (90 aa).

As to quaternary structure, interacts with pro-CASP1. Interacts with CARD8. In terms of tissue distribution, primarily expressed in the heart and placenta.

Functionally, inhibits generation of IL-1-beta by interacting with caspase-1 and preventing its association with RIP2. Down-regulates the release of IL1B. This is Caspase recruitment domain-containing protein 18 (CARD18) from Homo sapiens (Human).